The chain runs to 136 residues: Secreted RxLR effector protein 15 (136 aa).

An N-terminal signal peptide occupies residues 1–22 (MRGHSALMMAVVTLAAVSSGAA). Positions 47 to 50 (RLLR) match the RxLR motif.

It belongs to the RxLR effector family.

It is found in the secreted. Its subcellular location is the host nucleus. The protein localises to the host cytoplasm. Functionally, effector that completely suppresses the host cell death induced by cell death-inducing proteins. The chain is Secreted RxLR effector protein 15 from Plasmopara viticola (Downy mildew of grapevine).